The primary structure comprises 89 residues: Small ribosomal subunit protein uS14A (89 aa).

Belongs to the universal ribosomal protein uS14 family. As to quaternary structure, part of the 30S ribosomal subunit. Contacts proteins S3 and S10.

Binds 16S rRNA, required for the assembly of 30S particles and may also be responsible for determining the conformation of the 16S rRNA at the A site. This Bacillus pumilus (strain SAFR-032) protein is Small ribosomal subunit protein uS14A.